The sequence spans 552 residues: Amino-acid acetyltransferase, mitochondrial (552 aa).

The N-terminal 32 residues, 1–32 (MIKTWIRCLTTEVRYHQPNAHGRSLVMSVLNS), are a transit peptide targeting the mitochondrion. Residues 379-545 (QTGKSDPVSK…LRDYAKYVRD (167 aa)) form the N-acetyltransferase domain.

Belongs to the acetyltransferase family.

The protein resides in the mitochondrion. The catalysed reaction is L-glutamate + acetyl-CoA = N-acetyl-L-glutamate + CoA + H(+). It participates in amino-acid biosynthesis; L-arginine biosynthesis; N(2)-acetyl-L-ornithine from L-glutamate: step 1/4. In terms of biological role, N-acetylglutamate synthase involved in arginine biosynthesis. This chain is Amino-acid acetyltransferase, mitochondrial (ARG2), found in Kluyveromyces lactis (strain ATCC 8585 / CBS 2359 / DSM 70799 / NBRC 1267 / NRRL Y-1140 / WM37) (Yeast).